We begin with the raw amino-acid sequence, 212 residues long: 3-isopropylmalate dehydratase small subunit 1 (212 aa).

The protein belongs to the LeuD family. LeuD type 1 subfamily. As to quaternary structure, heterodimer of LeuC and LeuD.

The enzyme catalyses (2R,3S)-3-isopropylmalate = (2S)-2-isopropylmalate. The protein operates within amino-acid biosynthesis; L-leucine biosynthesis; L-leucine from 3-methyl-2-oxobutanoate: step 2/4. Catalyzes the isomerization between 2-isopropylmalate and 3-isopropylmalate, via the formation of 2-isopropylmaleate. The chain is 3-isopropylmalate dehydratase small subunit 1 from Chromobacterium violaceum (strain ATCC 12472 / DSM 30191 / JCM 1249 / CCUG 213 / NBRC 12614 / NCIMB 9131 / NCTC 9757 / MK).